The chain runs to 351 residues: Dihydroorotate dehydrogenase (quinone) (351 aa).

FMN is bound by residues 67 to 71 and threonine 91; that span reads AGFDK. Lysine 71 contributes to the substrate binding site. Substrate is bound at residue 116–120; that stretch reads NAMGF. 2 residues coordinate FMN: asparagine 145 and asparagine 178. Asparagine 178 is a binding site for substrate. Serine 181 acts as the Nucleophile in catalysis. Residue asparagine 183 coordinates substrate. The FMN site is built by lysine 214 and threonine 242. 243–244 serves as a coordination point for substrate; sequence NT. FMN-binding positions include glycine 262, glycine 291, and 312-313; that span reads YT.

This sequence belongs to the dihydroorotate dehydrogenase family. Type 2 subfamily. As to quaternary structure, monomer. FMN is required as a cofactor.

Its subcellular location is the cell membrane. It carries out the reaction (S)-dihydroorotate + a quinone = orotate + a quinol. It participates in pyrimidine metabolism; UMP biosynthesis via de novo pathway; orotate from (S)-dihydroorotate (quinone route): step 1/1. Its function is as follows. Catalyzes the conversion of dihydroorotate to orotate with quinone as electron acceptor. This chain is Dihydroorotate dehydrogenase (quinone), found in Nitratiruptor sp. (strain SB155-2).